Reading from the N-terminus, the 529-residue chain is Na(+)/H(+) antiporter NhaB (529 aa).

12 consecutive transmembrane segments (helical) span residues 13–33 (FLGK…IINP), 34–54 (IVFF…EFIF), 90–110 (LVAN…IYFM), 113–133 (LLLF…ILSL), 149–166 (LTVI…YSIY), 205–225 (LLMH…VGEP), 241–261 (FLIR…LTCF), 306–326 (GLIA…VGLI), 327–347 (GLSV…HSLG), 351–371 (EEAL…AVII), 451–471 (ATPN…APLI), and 479–499 (VIMA…GIVF).

It belongs to the NhaB Na(+)/H(+) (TC 2.A.34) antiporter family.

Its subcellular location is the cell inner membrane. It catalyses the reaction 2 Na(+)(in) + 3 H(+)(out) = 2 Na(+)(out) + 3 H(+)(in). Na(+)/H(+) antiporter that extrudes sodium in exchange for external protons. The chain is Na(+)/H(+) antiporter NhaB from Vibrio vulnificus (strain YJ016).